A 441-amino-acid polypeptide reads, in one-letter code: tRNA-2-methylthio-N(6)-dimethylallyladenosine synthase (441 aa).

An MTTase N-terminal domain is found at 5–120 (KLLYIETFGC…LPEMVRAAEQ (116 aa)). C14, C50, C83, C158, C162, and C165 together coordinate [4Fe-4S] cluster. Residues 144-374 (EGGGVTRFVT…QGLQRDMTIE (231 aa)) enclose the Radical SAM core domain. Residues 377–439 (AGFVGTCQAV…PNSLLGELAV (63 aa)) form the TRAM domain.

The protein belongs to the methylthiotransferase family. MiaB subfamily. In terms of assembly, monomer. The cofactor is [4Fe-4S] cluster.

It localises to the cytoplasm. The enzyme catalyses N(6)-dimethylallyladenosine(37) in tRNA + (sulfur carrier)-SH + AH2 + 2 S-adenosyl-L-methionine = 2-methylsulfanyl-N(6)-dimethylallyladenosine(37) in tRNA + (sulfur carrier)-H + 5'-deoxyadenosine + L-methionine + A + S-adenosyl-L-homocysteine + 2 H(+). Catalyzes the methylthiolation of N6-(dimethylallyl)adenosine (i(6)A), leading to the formation of 2-methylthio-N6-(dimethylallyl)adenosine (ms(2)i(6)A) at position 37 in tRNAs that read codons beginning with uridine. This chain is tRNA-2-methylthio-N(6)-dimethylallyladenosine synthase, found in Geobacter metallireducens (strain ATCC 53774 / DSM 7210 / GS-15).